Here is a 313-residue protein sequence, read N- to C-terminus: Protein FixB (313 aa).

An FAD-binding site is contributed by 255–283 (LYLAVGISGQIQHMVGANASQTIFAINKD).

Belongs to the ETF alpha-subunit/FixB family. In terms of assembly, heterodimer of FixA and FixB.

It functions in the pathway amine and polyamine metabolism; carnitine metabolism. Its function is as follows. Required for anaerobic carnitine reduction. May bring reductant to CaiA. The polypeptide is Protein FixB (Escherichia coli O139:H28 (strain E24377A / ETEC)).